The following is a 481-amino-acid chain: 7-deoxyloganetin glucosyltransferase (481 aa).

Residue His22 is the Proton acceptor of the active site. His22 provides a ligand contact to an anthocyanidin. The Charge relay role is filled by Asp126. UDP-alpha-D-glucose is bound by residues Thr148, Gln363, His378, Trp381, Asn382, Ser383, and Glu386. Residue Ala401 coordinates an anthocyanidin. Residues Glu402 and Gln403 each contribute to the UDP-alpha-D-glucose site.

It belongs to the UDP-glycosyltransferase family. Ubiquitous. Very low expression in stems.

The enzyme catalyses 7-deoxyloganetin + UDP-alpha-D-glucose = 7-deoxyloganin + UDP + H(+). Its function is as follows. Iridoid glucosyltransferase acting on genipin and 7-deoxyloganetin. No activity with 7-deoxyloganetic acid. Involved in geniposide biosynthesis. This is 7-deoxyloganetin glucosyltransferase (UGT85A24) from Gardenia jasminoides (Cape jasmine).